Here is a 232-residue protein sequence, read N- to C-terminus: Orotidine 5'-phosphate decarboxylase (232 aa).

Residues aspartate 11, lysine 33, 60–69 (DLKFHDIPNT), threonine 120, arginine 181, glutamine 190, glycine 210, and arginine 211 contribute to the substrate site. Lysine 62 serves as the catalytic Proton donor.

It belongs to the OMP decarboxylase family. Type 1 subfamily. As to quaternary structure, homodimer.

The enzyme catalyses orotidine 5'-phosphate + H(+) = UMP + CO2. It participates in pyrimidine metabolism; UMP biosynthesis via de novo pathway; UMP from orotate: step 2/2. Catalyzes the decarboxylation of orotidine 5'-monophosphate (OMP) to uridine 5'-monophosphate (UMP). The polypeptide is Orotidine 5'-phosphate decarboxylase (Vibrio vulnificus (strain CMCP6)).